Reading from the N-terminus, the 183-residue chain is Probable cobalt-precorrin-6B C(15)-methyltransferase (decarboxylating) (183 aa).

Residues T19, 43 to 47 (GCGSG), D64, and A92 each bind S-adenosyl-L-methionine.

The protein belongs to the methyltransferase superfamily. Archaeal-type CbiT family.

The catalysed reaction is Co-precorrin-6B + S-adenosyl-L-methionine = Co-precorrin-7 + S-adenosyl-L-homocysteine + CO2. Its pathway is cofactor biosynthesis; adenosylcobalamin biosynthesis; cob(II)yrinate a,c-diamide from sirohydrochlorin (anaerobic route): step 8/10. Its function is as follows. Catalyzes the methylation of C-15 in cobalt-precorrin-6B followed by the decarboxylation of C-12 to form cobalt-precorrin-7. This chain is Probable cobalt-precorrin-6B C(15)-methyltransferase (decarboxylating), found in Methanocaldococcus jannaschii (strain ATCC 43067 / DSM 2661 / JAL-1 / JCM 10045 / NBRC 100440) (Methanococcus jannaschii).